The following is a 71-amino-acid chain: UPF0346 protein SP70585_0986 (71 aa).

It belongs to the UPF0346 family.

This Streptococcus pneumoniae (strain 70585) protein is UPF0346 protein SP70585_0986.